The following is a 251-amino-acid chain: MRTPIIAGNWKMNKNPQETQEFLDAIKGKLPDASVVESVIAAPAIDLSTLVAFSKDEQLKTAAENSYFEDEGAFTGETSPKALNEMGVNYVVIGHSERRQYFGETDEDINKKAKAIFNNNMTPIICCGETLEQREAGETNEWVAGQITNALKDLTAEQVAASVIAYEPIWAIGTGKTASSDQAQEVCHVIRETVAKLYDQTVADKVRIQYGGSVKPANIAELMGKEDIDGGLVGGASLDPESFLELVNYKG.

Position 9-11 (9-11 (NWK)) interacts with substrate. The active-site Electrophile is His95. The Proton acceptor role is filled by Glu167. Substrate is bound by residues Gly173, Ser213, and 234-235 (GG).

This sequence belongs to the triosephosphate isomerase family. In terms of assembly, homodimer.

The protein resides in the cytoplasm. The catalysed reaction is D-glyceraldehyde 3-phosphate = dihydroxyacetone phosphate. Its pathway is carbohydrate biosynthesis; gluconeogenesis. It functions in the pathway carbohydrate degradation; glycolysis; D-glyceraldehyde 3-phosphate from glycerone phosphate: step 1/1. In terms of biological role, involved in the gluconeogenesis. Catalyzes stereospecifically the conversion of dihydroxyacetone phosphate (DHAP) to D-glyceraldehyde-3-phosphate (G3P). The sequence is that of Triosephosphate isomerase from Pediococcus pentosaceus (strain ATCC 25745 / CCUG 21536 / LMG 10740 / 183-1w).